The sequence spans 504 residues: L-carnitine/gamma-butyrobetaine antiporter (504 aa).

The next 12 membrane-spanning stretches (helical) occupy residues 10–30 (IEPK…WLTV), 51–71 (WGWA…WLVF), 92–112 (IFMM…SIEI), 143–163 (GPLP…FFFV), 195–215 (FYLV…TPLV), 231–251 (LDAI…ACGL), 263–283 (SYLS…SFIM), 316–336 (WTVF…IFLA), 347–367 (LCFG…TVLG), 398–418 (WAAL…CFIA), 446–466 (LLVR…LLAL), and 475–495 (AIIA…LSFI).

Belongs to the BCCT transporter (TC 2.A.15) family. CaiT subfamily. In terms of assembly, homotrimer.

Its subcellular location is the cell inner membrane. It catalyses the reaction 4-(trimethylamino)butanoate(in) + (R)-carnitine(out) = 4-(trimethylamino)butanoate(out) + (R)-carnitine(in). Its pathway is amine and polyamine metabolism; carnitine metabolism. Functionally, catalyzes the exchange of L-carnitine for gamma-butyrobetaine. This is L-carnitine/gamma-butyrobetaine antiporter from Escherichia coli O6:K15:H31 (strain 536 / UPEC).